Reading from the N-terminus, the 503-residue chain is Aspartyl/glutamyl-tRNA(Asn/Gln) amidotransferase subunit B (503 aa).

The protein belongs to the GatB/GatE family. GatB subfamily. Heterotrimer of A, B and C subunits.

The enzyme catalyses L-glutamyl-tRNA(Gln) + L-glutamine + ATP + H2O = L-glutaminyl-tRNA(Gln) + L-glutamate + ADP + phosphate + H(+). The catalysed reaction is L-aspartyl-tRNA(Asn) + L-glutamine + ATP + H2O = L-asparaginyl-tRNA(Asn) + L-glutamate + ADP + phosphate + 2 H(+). In terms of biological role, allows the formation of correctly charged Asn-tRNA(Asn) or Gln-tRNA(Gln) through the transamidation of misacylated Asp-tRNA(Asn) or Glu-tRNA(Gln) in organisms which lack either or both of asparaginyl-tRNA or glutaminyl-tRNA synthetases. The reaction takes place in the presence of glutamine and ATP through an activated phospho-Asp-tRNA(Asn) or phospho-Glu-tRNA(Gln). This chain is Aspartyl/glutamyl-tRNA(Asn/Gln) amidotransferase subunit B, found in Rhodococcus erythropolis (strain PR4 / NBRC 100887).